The sequence spans 330 residues: Ketol-acid reductoisomerase (NADP(+)) (330 aa).

In terms of domain architecture, KARI N-terminal Rossmann spans 1–181 (MKVYYEQDAT…GGARSGVIET (181 aa)). NADP(+) contacts are provided by residues 24–27 (YGSQ), R47, and 82–85 (DQVQ). H107 is an active-site residue. G133 is a binding site for NADP(+). A KARI C-terminal knotted domain is found at 182-327 (TFKEETETDL…GKLRGMMPWL (146 aa)). Mg(2+)-binding residues include D190, E194, E226, and E230. S251 contacts substrate.

This sequence belongs to the ketol-acid reductoisomerase family. Mg(2+) serves as cofactor.

It catalyses the reaction (2R)-2,3-dihydroxy-3-methylbutanoate + NADP(+) = (2S)-2-acetolactate + NADPH + H(+). It carries out the reaction (2R,3R)-2,3-dihydroxy-3-methylpentanoate + NADP(+) = (S)-2-ethyl-2-hydroxy-3-oxobutanoate + NADPH + H(+). The protein operates within amino-acid biosynthesis; L-isoleucine biosynthesis; L-isoleucine from 2-oxobutanoate: step 2/4. It participates in amino-acid biosynthesis; L-valine biosynthesis; L-valine from pyruvate: step 2/4. In terms of biological role, involved in the biosynthesis of branched-chain amino acids (BCAA). Catalyzes an alkyl-migration followed by a ketol-acid reduction of (S)-2-acetolactate (S2AL) to yield (R)-2,3-dihydroxy-isovalerate. In the isomerase reaction, S2AL is rearranged via a Mg-dependent methyl migration to produce 3-hydroxy-3-methyl-2-ketobutyrate (HMKB). In the reductase reaction, this 2-ketoacid undergoes a metal-dependent reduction by NADPH to yield (R)-2,3-dihydroxy-isovalerate. The protein is Ketol-acid reductoisomerase (NADP(+)) of Nitratidesulfovibrio vulgaris (strain DSM 19637 / Miyazaki F) (Desulfovibrio vulgaris).